The primary structure comprises 749 residues: Disintegrin and metalloproteinase domain-containing protein 10 (749 aa).

A signal peptide spans 1 to 19 (MVLPTVLILLLSWAAGLGG). Positions 20 to 214 (QYGNPLNKYI…SGPELLRKKR (195 aa)) are excised as a propeptide. At 20–673 (QYGNPLNKYI…SPQLYENIAE (654 aa)) the chain is on the extracellular side. The short motif at 171–178 (GGCADHSV) is the Cysteine switch element. Cysteine 173 is a binding site for Zn(2+). Positions 221–457 (NTCQLYIQTD…KRNNCFVESG (237 aa)) constitute a Peptidase M12B domain. 17 cysteine pairs are disulfide-bonded: cysteine 223–cysteine 314, cysteine 345–cysteine 452, cysteine 400–cysteine 436, cysteine 461–cysteine 496, cysteine 472–cysteine 485, cysteine 474–cysteine 480, cysteine 484–cysteine 516, cysteine 504–cysteine 512, cysteine 511–cysteine 537, cysteine 525–cysteine 544, cysteine 531–cysteine 563, cysteine 556–cysteine 568, cysteine 573–cysteine 599, cysteine 581–cysteine 608, cysteine 583–cysteine 598, cysteine 595–cysteine 640, and cysteine 633–cysteine 646. Residues asparagine 268 and asparagine 279 are each glycosylated (N-linked (GlcNAc...) asparagine). Histidine 384 serves as a coordination point for Zn(2+). Residue glutamate 385 is part of the active site. Residues histidine 388 and histidine 394 each contribute to the Zn(2+) site. N-linked (GlcNAc...) asparagine glycosylation occurs at asparagine 440. The 95-residue stretch at 458–552 (QPICGNGMVE…LCPASDPKPN (95 aa)) folds into the Disintegrin domain. Asparagine 552 is a glycosylation site (N-linked (GlcNAc...) asparagine). The helical transmembrane segment at 674-694 (WIVAHWWAVLLMGIALIMLMA) threads the bilayer. Over 695-749 (GFIKICSVHTPSSNPKLPPPKPLPGTLKRRRPPQPIQQPPRQRPRESYQMGHMRR) the chain is Cytoplasmic. A disordered region spans residues 705 to 749 (PSSNPKLPPPKPLPGTLKRRRPPQPIQQPPRQRPRESYQMGHMRR). Residues 709-716 (PKLPPPKP) carry the SH3-binding motif. Threonine 720 bears the Phosphothreonine mark. Residues 723-729 (RRRPPQP) carry the SH3-binding motif. The interval 735 to 749 (RQRPRESYQMGHMRR) is interaction with AP2A1, AP2A2 and AP2M1.

As to quaternary structure, forms a ternary EFNA5-EPHA3-ADAM10 complex mediating EFNA5 extracellular domain shedding by ADAM10 which regulates the EFNA5-EPHA3 complex internalization and function, the cleavage occurs in trans, with ADAM10 and its substrate being on the membranes of opposing cells. Interacts with the clathrin adapter AP2 complex subunits AP2A1, AP2A2, AP2B1, and AP2M1; this interaction facilitates ADAM10 endocytosis from the plasma membrane during long-term potentiation in hippocampal neurons. Forms a ternary complex composed of ADAM10, EPHA4 and CADH1; within the complex, ADAM10 cleaves CADH1 which disrupts adherens junctions. Interacts with EPHA2. Interacts with NGF in a divalent cation-dependent manner. Interacts with TSPAN14; the interaction promotes ADAM10 maturation and cell surface expression. Interacts with TSPAN5, TSPAN10, TSPAN14, TSPAN15, TSPAN17 and TSPAN33; these interactions regulate ADAM10 substrate specificity, endocytosis and turnover. Interacts (via extracellular domain) with TSPAN33 (via extracellular domain) and (via cytoplasmic domain) with AFDN; interaction with TSPAN33 allows the docking of ADAM10 to zonula adherens through a PDZ11-dependent interaction between TSPAN33 and PLEKHA7 while interaction with AFDN locks ADAM10 at zonula adherens. Interacts with DLG1; this interaction recruits ADAM10 to the cell membrane during long-term depression in hippocampal neurons. Interacts (via extracellular domain) with BACE1 (via extracellular domain). Interacts with FAM171A1. The cofactor is Zn(2+). In terms of processing, the precursor is cleaved by furin and PCSK7. In terms of tissue distribution, expressed in the brain, specifically in neurons and astrocytes (at protein level). Expressed in inner and outer pillar cells of the organ of Corti (at protein level). Expressed in kidney and lung.

It is found in the cell membrane. Its subcellular location is the golgi apparatus membrane. The protein localises to the cytoplasmic vesicle. It localises to the clathrin-coated vesicle. The protein resides in the cell projection. It is found in the axon. Its subcellular location is the dendrite. The protein localises to the cell junction. It localises to the adherens junction. The protein resides in the cytoplasm. The catalysed reaction is Endopeptidase of broad specificity.. Its activity is regulated as follows. Catalytically inactive when the propeptide is intact and associated with the mature enzyme. The disintegrin and cysteine-rich regions modulate access of substrates to exerts an inhibitory effect on the cleavage of ADAM10 substrates. In terms of biological role, transmembrane metalloprotease which mediates the ectodomain shedding of a myriad of transmembrane proteins, including adhesion proteins, growth factor precursors and cytokines being essential for development and tissue homeostasis. Associates with six members of the tetraspanin superfamily TspanC8 which regulate its exit from the endoplasmic reticulum and its substrate selectivity. Cleaves the membrane-bound precursor of TNF-alpha to its mature soluble form. Responsible for the proteolytical release of soluble JAM3 from endothelial cells surface. Responsible for the proteolytic release of several other cell-surface proteins, including heparin-binding epidermal growth-like factor, ephrin-A2, CD44, CDH2 and for constitutive and regulated alpha-secretase cleavage of amyloid precursor protein (APP) at '687-Lys-|-Leu-688'. Contributes to the normal cleavage of the cellular prion protein. Involved in the cleavage of the adhesion molecule L1 at the cell surface and in released membrane vesicles, suggesting a vesicle-based protease activity. Also controls the proteolytic processing of Notch and mediates lateral inhibition during neurogenesis. Required for the development of type 1 transitional B cells into marginal zone B cells, probably by cleaving Notch. Responsible for the FasL ectodomain shedding and for the generation of the remnant ADAM10-processed FasL (FasL APL) transmembrane form. Also cleaves the ectodomain of the integral membrane proteins CORIN and ITM2B. Mediates the proteolytic cleavage of LAG3, leading to release the secreted form of LAG3. Mediates the proteolytic cleavage of IL6R and IL11RA, leading to the release of secreted forms of IL6R and IL11RA. Enhances the cleavage of CHL1 by BACE1. Cleaves NRCAM. Cleaves TREM2, resulting in shedding of the TREM2 ectodomain. Involved in the development and maturation of glomerular and coronary vasculature. During development of the cochlear organ of Corti, promotes pillar cell separation by forming a ternary complex with CADH1 and EPHA4 and cleaving CADH1 at adherens junctions. May regulate the EFNA5-EPHA3 signaling. The chain is Disintegrin and metalloproteinase domain-containing protein 10 (Adam10) from Mus musculus (Mouse).